The chain runs to 525 residues: GMP synthase [glutamine-hydrolyzing] (525 aa).

Residues 16–205 (PVLVVDFGAQ…LHDFAGLGAD (190 aa)) enclose the Glutamine amidotransferase type-1 domain. The active-site Nucleophile is the cysteine 93. Residues histidine 179 and glutamate 181 contribute to the active site. Residues 206 to 399 (WTAANIAGVL…LGLPEEIVAR (194 aa)) enclose the GMPS ATP-PPase domain. 233 to 239 (SGGVDSA) provides a ligand contact to ATP.

As to quaternary structure, homodimer.

It catalyses the reaction XMP + L-glutamine + ATP + H2O = GMP + L-glutamate + AMP + diphosphate + 2 H(+). It participates in purine metabolism; GMP biosynthesis; GMP from XMP (L-Gln route): step 1/1. Functionally, catalyzes the synthesis of GMP from XMP. The protein is GMP synthase [glutamine-hydrolyzing] of Mycolicibacterium paratuberculosis (strain ATCC BAA-968 / K-10) (Mycobacterium paratuberculosis).